A 348-amino-acid polypeptide reads, in one-letter code: tRNA N6-adenosine threonylcarbamoyltransferase (348 aa).

His111 and His115 together coordinate Fe cation. Substrate contacts are provided by residues 134-138, Asp167, Gly180, Asp184, and Asn279; that span reads LVSGG. Asp307 provides a ligand contact to Fe cation.

Belongs to the KAE1 / TsaD family. Fe(2+) serves as cofactor.

Its subcellular location is the cytoplasm. The catalysed reaction is L-threonylcarbamoyladenylate + adenosine(37) in tRNA = N(6)-L-threonylcarbamoyladenosine(37) in tRNA + AMP + H(+). Its function is as follows. Required for the formation of a threonylcarbamoyl group on adenosine at position 37 (t(6)A37) in tRNAs that read codons beginning with adenine. Is involved in the transfer of the threonylcarbamoyl moiety of threonylcarbamoyl-AMP (TC-AMP) to the N6 group of A37, together with TsaE and TsaB. TsaD likely plays a direct catalytic role in this reaction. This is tRNA N6-adenosine threonylcarbamoyltransferase from Synechocystis sp. (strain ATCC 27184 / PCC 6803 / Kazusa).